A 212-amino-acid chain; its full sequence is Interleukin-6 (212 aa).

The first 29 residues, 1 to 29 (MTSFSTSAFRPVAFSLGLLLVMPAAFPAP), serve as a signal peptide directing secretion. Cysteines 72 and 78 form a disulfide. An N-linked (GlcNAc...) asparagine glycan is attached at Asn73. Phosphoserine is present on Ser81. The cysteines at positions 101 and 111 are disulfide-linked. 2 N-linked (GlcNAc...) asparagine glycosylation sites follow: Asn160 and Asn172.

Belongs to the IL-6 superfamily. In terms of assembly, component of a hexamer of two molecules each of IL6, IL6R and IL6ST; first binds to IL6R to associate with the signaling subunit IL6ST. Interacts with IL6R (via the N-terminal ectodomain); this interaction may be affected by IL6R-binding with SORL1, hence decreasing IL6 cis signaling. Interacts with SORL1 (via the N-terminal ectodomain); this interaction leads to IL6 internalization and lysosomal degradation. May form a trimeric complex with the soluble SORL1 ectodomain and soluble IL6R receptor; this interaction might stabilize circulating IL6, hence promoting IL6 trans signaling.

It localises to the secreted. Functionally, cytokine with a wide variety of biological functions in immunity, tissue regeneration, and metabolism. Binds to IL6R, then the complex associates to the signaling subunit IL6ST/gp130 to trigger the intracellular IL6-signaling pathway. The interaction with the membrane-bound IL6R and IL6ST stimulates 'classic signaling', whereas the binding of IL6 and soluble IL6R to IL6ST stimulates 'trans-signaling'. Alternatively, 'cluster signaling' occurs when membrane-bound IL6:IL6R complexes on transmitter cells activate IL6ST receptors on neighboring receiver cells. In terms of biological role, IL6 is a potent inducer of the acute phase response. Rapid production of IL6 contributes to host defense during infection and tissue injury, but excessive IL6 synthesis is involved in disease pathology. In the innate immune response, is synthesized by myeloid cells, such as macrophages and dendritic cells, upon recognition of pathogens through toll-like receptors (TLRs) at the site of infection or tissue injury. In the adaptive immune response, is required for the differentiation of B cells into immunoglobulin-secreting cells. Plays a major role in the differentiation of CD4(+) T cell subsets. Essential factor for the development of T follicular helper (Tfh) cells that are required for the induction of germinal-center formation. Required to drive naive CD4(+) T cells to the Th17 lineage. Also required for proliferation of myeloma cells and the survival of plasmablast cells. Acts as an essential factor in bone homeostasis and on vessels directly or indirectly by induction of VEGF, resulting in increased angiogenesis activity and vascular permeability. Induces, through 'trans-signaling' and synergistically with IL1B and TNF, the production of VEGF. Involved in metabolic controls, is discharged into the bloodstream after muscle contraction increasing lipolysis and improving insulin resistance. 'Trans-signaling' in central nervous system also regulates energy and glucose homeostasis. Mediates, through GLP-1, crosstalk between insulin-sensitive tissues, intestinal L cells and pancreatic islets to adapt to changes in insulin demand. Also acts as a myokine. Plays a protective role during liver injury, being required for maintenance of tissue regeneration. Also has a pivotal role in iron metabolism by regulating HAMP/hepcidin expression upon inflammation or bacterial infection. Through activation of IL6ST-YAP-NOTCH pathway, induces inflammation-induced epithelial regeneration. This is Interleukin-6 (IL6) from Saimiri sciureus (Common squirrel monkey).